We begin with the raw amino-acid sequence, 300 residues long: D-alanine--D-alanine ligase (300 aa).

The ATP-grasp domain occupies 99-293 (KKILKYANIN…FAELLNSIVK (195 aa)). 126–181 (IEKIGYPVFVKPNSGGSSVATNLVKNKEGIKEAVELALKYDKEVMIENYTKGEEIT) lines the ATP pocket. Residues aspartate 248, glutamate 260, and asparagine 262 each coordinate Mg(2+).

The protein belongs to the D-alanine--D-alanine ligase family. Mg(2+) serves as cofactor. Mn(2+) is required as a cofactor.

Its subcellular location is the cytoplasm. It carries out the reaction 2 D-alanine + ATP = D-alanyl-D-alanine + ADP + phosphate + H(+). It functions in the pathway cell wall biogenesis; peptidoglycan biosynthesis. In terms of biological role, cell wall formation. This chain is D-alanine--D-alanine ligase, found in Clostridium botulinum (strain Loch Maree / Type A3).